The following is a 184-amino-acid chain: Protein C8 (184 aa).

Positions 1–21 (MSSIRFIACLYLISIFGNCHE) are cleaved as a signal peptide.

Belongs to the poxviridae C8 protein family.

The polypeptide is Protein C8 (Vaccinia virus (strain Copenhagen) (VACV)).